The following is an 862-amino-acid chain: ATP-dependent helicase Lhr-Core (862 aa).

8 residues coordinate ATP: glutamine 37, lysine 60, threonine 61, aspartate 178, glutamate 179, valine 360, arginine 377, and histidine 380. The Helicase ATP-binding domain occupies 41 to 233; that stretch reads IMDIHRGRNV…FLVGYSYGSE (193 aa). Residues 178-181 carry the DEAH box motif; the sequence is DEIH. The 156-residue stretch at 269–424 folds into the Helicase C-terminal domain; sequence ALYDILHDLI…SIKVPENCLD (156 aa). Residues 425 to 513 form a WH domain region; the sequence is VLAQHIYGMA…LYSTNIGTIP (89 aa). Positions 514-862 are domain 4; sequence DRSAAVVKCG…HQAIIDEIKR (349 aa).

The protein belongs to the Lhr helicase family. Lhr-Core subfamily. Monomer.

The catalysed reaction is Couples ATP hydrolysis with the unwinding of duplex DNA by translocating in the 3'-5' direction.. The enzyme catalyses ATP + H2O = ADP + phosphate + H(+). DNA helicase that translocates in a 3'-5' direction on single-stranded (ss)DNA, probably involved in DNA repair. Most active on three- or four-stranded forked DNA; flayed structures and Holliday junction (HJ) substrates are unwound slightly less well. Also unwinds 3'-tailed duplexes; both RNA:DNA hybrids and double-stranded (ds)DNA with a 3'-single strand (ss)DNA loading strand are unwound. Substrates where the helicase loads on a 3'-ssRNA tail (DNA:RNA and RNA:RNA) were not tested. Blunt-ended dsDNA is not a substrate. Probably involved in replication-coupled DNA repair; remodeling of fork DNA after binding by Lhr generates ssDNA for ATP-dependent DNA translocation. In Methanothermobacter thermautotrophicus (strain ATCC 29096 / DSM 1053 / JCM 10044 / NBRC 100330 / Delta H) (Methanobacterium thermoautotrophicum), this protein is ATP-dependent helicase Lhr-Core.